Consider the following 211-residue polypeptide: Pyridoxine/pyridoxamine 5'-phosphate oxidase (211 aa).

Residues 7-10 and Lys-65 contribute to the substrate site; that span reads RREY. FMN-binding positions include 60-65, 75-76, Lys-82, and Gln-104; these read RIVLLK and FT. Substrate-binding residues include Tyr-122, Arg-126, and Ser-130. Residues 139 to 140 and Trp-184 contribute to the FMN site; that span reads QS. Residue 190–192 coordinates substrate; sequence RLH. Arg-194 is a binding site for FMN.

This sequence belongs to the pyridoxamine 5'-phosphate oxidase family. Homodimer. FMN serves as cofactor.

It carries out the reaction pyridoxamine 5'-phosphate + O2 + H2O = pyridoxal 5'-phosphate + H2O2 + NH4(+). The catalysed reaction is pyridoxine 5'-phosphate + O2 = pyridoxal 5'-phosphate + H2O2. It functions in the pathway cofactor metabolism; pyridoxal 5'-phosphate salvage; pyridoxal 5'-phosphate from pyridoxamine 5'-phosphate: step 1/1. The protein operates within cofactor metabolism; pyridoxal 5'-phosphate salvage; pyridoxal 5'-phosphate from pyridoxine 5'-phosphate: step 1/1. Its function is as follows. Catalyzes the oxidation of either pyridoxine 5'-phosphate (PNP) or pyridoxamine 5'-phosphate (PMP) into pyridoxal 5'-phosphate (PLP). The polypeptide is Pyridoxine/pyridoxamine 5'-phosphate oxidase (Teredinibacter turnerae (strain ATCC 39867 / T7901)).